Consider the following 244-residue polypeptide: Ureidoacrylate amidohydrolase RutB (244 aa).

The active-site Proton acceptor is the aspartate 38. Lysine 147 is a catalytic residue. Cysteine 180 acts as the Nucleophile in catalysis.

It belongs to the isochorismatase family. RutB subfamily.

The enzyme catalyses (Z)-3-ureidoacrylate + H2O + H(+) = (Z)-3-aminoacrylate + NH4(+) + CO2. It catalyses the reaction (Z)-3-ureidoacrylate + H2O = (Z)-3-aminoacrylate + carbamate + H(+). The catalysed reaction is (Z)-2-methylureidoacrylate + H2O + H(+) = (Z)-2-methylaminoacrylate + NH4(+) + CO2. Hydrolyzes ureidoacrylate to form aminoacrylate and carbamate. The carbamate hydrolyzes spontaneously, thereby releasing one of the nitrogen atoms of the pyrimidine ring as ammonia and one of its carbon atoms as CO2. In Escherichia coli O55:H7 (strain CB9615 / EPEC), this protein is Ureidoacrylate amidohydrolase RutB.